The primary structure comprises 66 residues: UPF0370 protein YpfN (66 aa).

Residues 4–24 (LAKYWWILVIVFLVGVLLNVI) form a helical membrane-spanning segment. Residues 39-66 (KPELPPHRDFNDKWDDDDDWPKKDQPKK) form a disordered region. Residues 42-51 (LPPHRDFNDK) show a composition bias toward basic and acidic residues.

Belongs to the UPF0370 family.

The protein localises to the cell membrane. The chain is UPF0370 protein YpfN from Escherichia coli O139:H28 (strain E24377A / ETEC).